A 168-amino-acid polypeptide reads, in one-letter code: G/U mismatch-specific DNA glycosylase (168 aa).

It belongs to the uracil-DNA glycosylase (UDG) superfamily. TDG/mug family. Binds DNA as a monomer.

Its subcellular location is the cytoplasm. It catalyses the reaction Specifically hydrolyzes mismatched double-stranded DNA and polynucleotides, releasing free uracil.. Its function is as follows. Excises ethenocytosine and uracil, which can arise by alkylation or deamination of cytosine, respectively, from the corresponding mispairs with guanine in ds-DNA. It is capable of hydrolyzing the carbon-nitrogen bond between the sugar-phosphate backbone of the DNA and the mispaired base. The complementary strand guanine functions in substrate recognition. Required for DNA damage lesion repair in stationary-phase cells. This is G/U mismatch-specific DNA glycosylase from Salmonella agona (strain SL483).